The chain runs to 579 residues: Peptidyl-prolyl cis-trans isomerase-like 2 (579 aa).

Positions 42–115 (RRLPFNFCSL…GEYVDPVTYK (74 aa)) constitute a U-box domain. The disordered stretch occupies residues 227 to 261 (AERAQRAESGAASKGLTKPGMSATAASQKTVSHQA). Residues 250-259 (TAASQKTVSH) are compositionally biased toward polar residues. The 160-residue stretch at 311–470 (QKGYARISTT…PDIRIKDVTI (160 aa)) folds into the PPIase cyclophilin-type domain. A disordered region spans residues 555-579 (EGPEPEPAKKKFKGGGGFGDFSSWD).

Belongs to the cyclophilin-type PPIase family. PPIL2 subfamily.

The protein resides in the nucleus. It catalyses the reaction [protein]-peptidylproline (omega=180) = [protein]-peptidylproline (omega=0). The enzyme catalyses S-ubiquitinyl-[E2 ubiquitin-conjugating enzyme]-L-cysteine + [acceptor protein]-L-lysine = [E2 ubiquitin-conjugating enzyme]-L-cysteine + N(6)-ubiquitinyl-[acceptor protein]-L-lysine.. It functions in the pathway protein modification; protein ubiquitination. Its function is as follows. May catalyze the cis-trans isomerization of proline imidic peptide bonds in oligopeptides thereby assisting the folding of proteins. May also function as a chaperone, playing a role in intracellular transport of proteins. May also have a protein ubiquitin ligase activity acting as an E3 ubiquitin protein ligase or as a ubiquitin-ubiquitin ligase promoting elongation of ubiquitin chains on proteins. This is Peptidyl-prolyl cis-trans isomerase-like 2 (cyp8) from Aspergillus fumigatus (strain ATCC MYA-4609 / CBS 101355 / FGSC A1100 / Af293) (Neosartorya fumigata).